A 722-amino-acid chain; its full sequence is Host cell factor 2 (722 aa).

Kelch repeat units lie at residues 34–79 (LMII…GFVC), 83–130 (RILV…RLGH), 207–255 (KMYV…VIGN), and 257–303 (MYIF…VSDS). Fibronectin type-III domains follow at residues 359–460 (APSQ…VDSS), 514–604 (TPSN…TCTP), and 606–716 (FPGA…DQEK). Positions 398–476 (ATSSDSSAAP…LAPNTSNNSS (79 aa)) are disordered. Residues 419-436 (QGSNSTLHNSVSDTVNST) show a composition bias toward polar residues.

In terms of assembly, binds KMT2A/MLL1. Component of the MLL1/MLL complex, at least composed of KMT2A/MLL1, ASH2L, RBBP5, DPY30, WDR5, MEN1, HCFC1 and HCFC2. Interacts with TASOR. In terms of tissue distribution, expressed in the spermatogonia, spermatocytes and ovary.

It is found in the cytoplasm. The protein resides in the nucleus. The polypeptide is Host cell factor 2 (Hcfc2) (Mus musculus (Mouse)).